A 469-amino-acid polypeptide reads, in one-letter code: Probable glucuronoxylan glucuronosyltransferase F8H (469 aa).

The Cytoplasmic portion of the chain corresponds to Met-1–Asn-36. Residues Ile-37–Leu-57 form a helical; Signal-anchor for type II membrane protein membrane-spanning segment. Topologically, residues Tyr-58–Met-469 are lumenal. N-linked (GlcNAc...) asparagine glycosylation is found at Asn-171, Asn-203, Asn-301, and Asn-411.

It belongs to the glycosyltransferase 47 family. As to expression, expressed in xylem cells in stems and in roots.

Its subcellular location is the golgi apparatus membrane. Functionally, involved in the synthesis of the hemicellulose glucuronoxylan, a major component of secondary cell walls. Probably involved in the synthesis of the glycosyl sequence at the glucuronoxylan reducing end. The protein is Probable glucuronoxylan glucuronosyltransferase F8H (F8H) of Arabidopsis thaliana (Mouse-ear cress).